The sequence spans 134 residues: Putative pre-16S rRNA nuclease (134 aa).

Belongs to the YqgF nuclease family.

It is found in the cytoplasm. In terms of biological role, could be a nuclease involved in processing of the 5'-end of pre-16S rRNA. This chain is Putative pre-16S rRNA nuclease, found in Helicobacter pylori (strain P12).